The following is a 345-amino-acid chain: UPF0324 membrane protein CTC_01844 (345 aa).

10 consecutive transmembrane segments (helical) span residues 7–24 (YSVG…SGFI), 28–50 (IPYR…NPIV), 70–87 (LAII…VLEV), 91–113 (SLIV…GKLF), 120–142 (SGLI…SPVI), 152–174 (AISA…GKYF), 181–203 (YGLW…YAFS), 209–231 (FSVI…FSYI), 261–283 (IFPW…IIPN), and 316–338 (SGFA…SFLV).

Belongs to the UPF0324 family.

The protein localises to the cell membrane. The sequence is that of UPF0324 membrane protein CTC_01844 from Clostridium tetani (strain Massachusetts / E88).